A 209-amino-acid chain; its full sequence is Large ribosomal subunit protein uL4 (209 aa).

The interval 46 to 76 (RGTASTKTRGEVSGGGRKPWRQKGTGRARHG) is disordered. Residues 63–76 (KPWRQKGTGRARHG) are compositionally biased toward basic residues.

Belongs to the universal ribosomal protein uL4 family. As to quaternary structure, part of the 50S ribosomal subunit.

Its function is as follows. One of the primary rRNA binding proteins, this protein initially binds near the 5'-end of the 23S rRNA. It is important during the early stages of 50S assembly. It makes multiple contacts with different domains of the 23S rRNA in the assembled 50S subunit and ribosome. Forms part of the polypeptide exit tunnel. In Halothermothrix orenii (strain H 168 / OCM 544 / DSM 9562), this protein is Large ribosomal subunit protein uL4.